We begin with the raw amino-acid sequence, 111 residues long: uncharacterized protein (111 aa).

This is an uncharacterized protein from Acanthamoeba polyphaga mimivirus (APMV).